We begin with the raw amino-acid sequence, 158 residues long: Transcriptional repressor NrdR (158 aa).

A zinc finger lies at 3–34; it reads CPSCQNTDSRVLESRAADAGRSVRRRRECLHC. The 91-residue stretch at 49–139 folds into the ATP-cone domain; that stretch reads ITVLKRNGNR…VYRDFRGVND (91 aa).

It belongs to the NrdR family. Zn(2+) is required as a cofactor.

In terms of biological role, negatively regulates transcription of bacterial ribonucleotide reductase nrd genes and operons by binding to NrdR-boxes. This is Transcriptional repressor NrdR from Prochlorococcus marinus (strain MIT 9313).